Reading from the N-terminus, the 511-residue chain is Glutamyl-tRNA(Gln) amidotransferase subunit A, mitochondrial (511 aa).

Catalysis depends on charge relay system residues K72 and S149. S173 serves as the catalytic Acyl-ester intermediate.

The protein belongs to the amidase family. GatA subfamily. As to quaternary structure, subunit of the heterotrimeric GatCAB amidotransferase (AdT) complex, composed of A, B and C subunits.

The protein resides in the mitochondrion. It catalyses the reaction L-glutamyl-tRNA(Gln) + L-glutamine + ATP + H2O = L-glutaminyl-tRNA(Gln) + L-glutamate + ADP + phosphate + H(+). Functionally, allows the formation of correctly charged Gln-tRNA(Gln) through the transamidation of misacylated Glu-tRNA(Gln) in the mitochondria. The reaction takes place in the presence of glutamine and ATP through an activated gamma-phospho-Glu-tRNA(Gln). This chain is Glutamyl-tRNA(Gln) amidotransferase subunit A, mitochondrial, found in Fusarium vanettenii (strain ATCC MYA-4622 / CBS 123669 / FGSC 9596 / NRRL 45880 / 77-13-4) (Fusarium solani subsp. pisi).